The following is a 506-amino-acid chain: MFSLQDLCRKNLFLPLEPLGKHVVQRLGLYWEGHGSLKRVGDCFICVDKIWILSIHKAIQIAASEGNENIVKLFLLWKGSLQYAIIGALEGRQYDLIQKYYNQIGDCHENLPLIQDPEIYERCHELNVTCTFQCLFQHAIRDNMLPIFQKYGEDLNGNRRMVQLLYEMACRLQNYDIIKWIGFNLHVYNLEAIFSIAFVRKDLTLYSLGYMLLLGRMSTEDRNFISIITRHLEYASKKGLFDFVLESLKYGGQVDTVLFQAVKYNHRKILAHFIHEIPRETVEKLILHAVESRASRKTFNLLLSSINYCVNPFVKKLLHTVVKHKYMLIIKLLLERPKKKINLVDAALFKLVKYSTYAEIVKFMKEFSVDPERVVKMAARLMRVDLIKKISNDAWENKLERIKHLKQMVNTMNHRNGKNLLMYNIHNITGYTCLNTKEAFNLTRFYAVHNATCLFKEMCKSCFVHDKIQFRELLEDCLHIANRHDYIQIAETADECIKYIDLITPK.

The protein belongs to the asfivirus MGF 505 family.

In terms of biological role, plays a role in virus cell tropism, and may be required for efficient virus replication in macrophages. The polypeptide is Protein MGF 505-9R (Ornithodoros (relapsing fever ticks)).